A 332-amino-acid polypeptide reads, in one-letter code: DNA-directed RNA polymerase subunit alpha (332 aa).

The segment at 1 to 232 is alpha N-terminal domain (alpha-NTD); it reads MKGYLKDFLK…DQLSVFVDLE (232 aa). Residues 247-332 form an alpha C-terminal domain (alpha-CTD) region; that stretch reads IDPVLLRPID…SLGDRARIAG (86 aa).

This sequence belongs to the RNA polymerase alpha chain family. In terms of assembly, homodimer. The RNAP catalytic core consists of 2 alpha, 1 beta, 1 beta' and 1 omega subunit. When a sigma factor is associated with the core the holoenzyme is formed, which can initiate transcription.

It carries out the reaction RNA(n) + a ribonucleoside 5'-triphosphate = RNA(n+1) + diphosphate. Functionally, DNA-dependent RNA polymerase catalyzes the transcription of DNA into RNA using the four ribonucleoside triphosphates as substrates. The sequence is that of DNA-directed RNA polymerase subunit alpha from Halorhodospira halophila (strain DSM 244 / SL1) (Ectothiorhodospira halophila (strain DSM 244 / SL1)).